A 304-amino-acid polypeptide reads, in one-letter code: GTPase Era (304 aa).

The Era-type G domain maps to 11-179; sequence YCGFIAIVGR…QKIVRKSLRE (169 aa). The tract at residues 19-26 is G1; that stretch reads GRPNVGKS. Residue 19–26 participates in GTP binding; that stretch reads GRPNVGKS. The tract at residues 45 to 49 is G2; that stretch reads QTTRH. The tract at residues 66–69 is G3; it reads DTPG. GTP-binding positions include 66–70 and 128–131; these read DTPGL and NKVD. A G4 region spans residues 128-131; it reads NKVD. A G5 region spans residues 158 to 160; it reads ISA. Residues 210–287 enclose the KH type-2 domain; that stretch reads TGEELPYSVT…HLELWVKVKA (78 aa).

It belongs to the TRAFAC class TrmE-Era-EngA-EngB-Septin-like GTPase superfamily. Era GTPase family. Monomer.

The protein resides in the cytoplasm. It localises to the cell inner membrane. Its function is as follows. An essential GTPase that binds both GDP and GTP, with rapid nucleotide exchange. Plays a role in 16S rRNA processing and 30S ribosomal subunit biogenesis and possibly also in cell cycle regulation and energy metabolism. This Actinobacillus pleuropneumoniae serotype 3 (strain JL03) protein is GTPase Era.